The sequence spans 462 residues: Dipeptidyl peptidase 1 (462 aa).

A signal peptide spans 1–24 (MGPWTHSLRAVLLLVLLGVCTVRS). Asn29 and Asn53 each carry an N-linked (GlcNAc...) asparagine glycan. Cystine bridges form between Cys30–Cys118, Cys54–Cys136, Cys254–Cys297, Cys290–Cys330, and Cys320–Cys336. A propeptide spanning residues 135–230 (ACFVGKKVES…DEIQQQILNL (96 aa)) is cleaved from the precursor. Cys257 is an active-site residue. Residue Asn275 is glycosylated (N-linked (GlcNAc...) asparagine). Residues Phe301 and Tyr303 each coordinate chloride. Tyr346 provides a ligand contact to chloride. Active-site residues include His404 and Asn426.

This sequence belongs to the peptidase C1 family. In terms of assembly, tetramer of heterotrimers consisting of exclusion domain, heavy- and light chains. Chloride serves as cofactor. In terms of tissue distribution, broadly distributed, but higher levels found in lung, liver, kidney and spleen. Lower levels found in testis and brain.

Its subcellular location is the lysosome. The catalysed reaction is Release of an N-terminal dipeptide, Xaa-Yaa-|-Zaa-, except when Xaa is Arg or Lys, or Yaa or Zaa is Pro.. Functionally, thiol protease. Has dipeptidylpeptidase activity. Active against a broad range of dipeptide substrates composed of both polar and hydrophobic amino acids. Proline cannot occupy the P1 position and arginine cannot occupy the P2 position of the substrate. Can act as both an exopeptidase and endopeptidase. Activates serine proteases such as elastase, cathepsin G and granzymes A and B. This chain is Dipeptidyl peptidase 1 (Ctsc), found in Mus musculus (Mouse).